A 177-amino-acid polypeptide reads, in one-letter code: Cytidylate kinase (177 aa).

Position 8–16 (8–16 (GPPGGGKTT)) interacts with ATP.

This sequence belongs to the cytidylate kinase family. Type 2 subfamily.

It is found in the cytoplasm. The catalysed reaction is CMP + ATP = CDP + ADP. It catalyses the reaction dCMP + ATP = dCDP + ADP. This chain is Cytidylate kinase, found in Staphylothermus marinus (strain ATCC 43588 / DSM 3639 / JCM 9404 / F1).